The sequence spans 128 residues: Holo-[acyl-carrier-protein] synthase (128 aa).

Residues Asp7 and Glu55 each contribute to the Mg(2+) site.

The protein belongs to the P-Pant transferase superfamily. AcpS family. Requires Mg(2+) as cofactor.

It localises to the cytoplasm. It catalyses the reaction apo-[ACP] + CoA = holo-[ACP] + adenosine 3',5'-bisphosphate + H(+). Functionally, transfers the 4'-phosphopantetheine moiety from coenzyme A to a Ser of acyl-carrier-protein. The chain is Holo-[acyl-carrier-protein] synthase from Moorella thermoacetica (strain ATCC 39073 / JCM 9320).